We begin with the raw amino-acid sequence, 203 residues long: Small ribosomal subunit protein uS4 (203 aa).

One can recognise an S4 RNA-binding domain in the interval 93–173 (RRLDNVVFRS…FPSWIQVDKA (81 aa)).

Belongs to the universal ribosomal protein uS4 family. Part of the 30S ribosomal subunit. Contacts protein S5. The interaction surface between S4 and S5 is involved in control of translational fidelity.

One of the primary rRNA binding proteins, it binds directly to 16S rRNA where it nucleates assembly of the body of the 30S subunit. Functionally, with S5 and S12 plays an important role in translational accuracy. The sequence is that of Small ribosomal subunit protein uS4 from Chlorobium limicola (strain DSM 245 / NBRC 103803 / 6330).